We begin with the raw amino-acid sequence, 116 residues long: Large-conductance mechanosensitive channel (116 aa).

The next 2 helical transmembrane spans lie at 7 to 27 and 64 to 84; these read EFAL…GAAF and GLFI…FIFV.

It belongs to the MscL family. Homopentamer.

It localises to the cell membrane. Functionally, channel that opens in response to stretch forces in the membrane lipid bilayer. May participate in the regulation of osmotic pressure changes within the cell. This Staphylococcus epidermidis (strain ATCC 35984 / DSM 28319 / BCRC 17069 / CCUG 31568 / BM 3577 / RP62A) protein is Large-conductance mechanosensitive channel.